We begin with the raw amino-acid sequence, 202 residues long: Small ribosomal subunit protein uS4c (202 aa).

One can recognise an S4 RNA-binding domain in the interval 90-153; the sequence is MRLDNVIFRL…KSETIISKNI (64 aa).

This sequence belongs to the universal ribosomal protein uS4 family. As to quaternary structure, part of the 30S ribosomal subunit. Contacts protein S5. The interaction surface between S4 and S5 is involved in control of translational fidelity.

The protein resides in the plastid. It is found in the chloroplast. Its function is as follows. One of the primary rRNA binding proteins, it binds directly to 16S rRNA where it nucleates assembly of the body of the 30S subunit. With S5 and S12 plays an important role in translational accuracy. The polypeptide is Small ribosomal subunit protein uS4c (rps4) (Hylocomium splendens (Glittering wood-moss)).